The following is a 178-amino-acid chain: ATP-dependent protease subunit HslV (178 aa).

Residue Thr7 is part of the active site. Na(+) contacts are provided by Gly162, Cys165, and Thr168.

It belongs to the peptidase T1B family. HslV subfamily. In terms of assembly, a double ring-shaped homohexamer of HslV is capped on each side by a ring-shaped HslU homohexamer. The assembly of the HslU/HslV complex is dependent on binding of ATP.

The protein resides in the cytoplasm. It carries out the reaction ATP-dependent cleavage of peptide bonds with broad specificity.. Allosterically activated by HslU binding. Its function is as follows. Protease subunit of a proteasome-like degradation complex believed to be a general protein degrading machinery. In Ralstonia nicotianae (strain ATCC BAA-1114 / GMI1000) (Ralstonia solanacearum), this protein is ATP-dependent protease subunit HslV.